We begin with the raw amino-acid sequence, 219 residues long: 7-cyano-7-deazaguanine synthase 2 (219 aa).

8 to 18 (YSGGMDSFTAL) is a binding site for ATP. Residues cysteine 185, cysteine 193, cysteine 196, and cysteine 199 each contribute to the Zn(2+) site.

This sequence belongs to the QueC family. The cofactor is Zn(2+).

It carries out the reaction 7-carboxy-7-deazaguanine + NH4(+) + ATP = 7-cyano-7-deazaguanine + ADP + phosphate + H2O + H(+). The protein operates within purine metabolism; 7-cyano-7-deazaguanine biosynthesis. In terms of biological role, catalyzes the ATP-dependent conversion of 7-carboxy-7-deazaguanine (CDG) to 7-cyano-7-deazaguanine (preQ(0)). This is 7-cyano-7-deazaguanine synthase 2 from Colwellia psychrerythraea (strain 34H / ATCC BAA-681) (Vibrio psychroerythus).